The primary structure comprises 379 residues: Queuine tRNA-ribosyltransferase (379 aa).

Residue Asp94 is the Proton acceptor of the active site. Substrate contacts are provided by residues 94–98 (DSGGF), Asp148, Gln191, and Gly218. The RNA binding stretch occupies residues 249–255 (GVGSPDS). Catalysis depends on Asp268, which acts as the Nucleophile. The interval 273 to 277 (TRIAR) is RNA binding; important for wobble base 34 recognition. Cys306, Cys308, Cys311, and His337 together coordinate Zn(2+).

This sequence belongs to the queuine tRNA-ribosyltransferase family. In terms of assembly, homodimer. Within each dimer, one monomer is responsible for RNA recognition and catalysis, while the other monomer binds to the replacement base PreQ1. Zn(2+) is required as a cofactor.

It carries out the reaction 7-aminomethyl-7-carbaguanine + guanosine(34) in tRNA = 7-aminomethyl-7-carbaguanosine(34) in tRNA + guanine. It functions in the pathway tRNA modification; tRNA-queuosine biosynthesis. Its function is as follows. Catalyzes the base-exchange of a guanine (G) residue with the queuine precursor 7-aminomethyl-7-deazaguanine (PreQ1) at position 34 (anticodon wobble position) in tRNAs with GU(N) anticodons (tRNA-Asp, -Asn, -His and -Tyr). Catalysis occurs through a double-displacement mechanism. The nucleophile active site attacks the C1' of nucleotide 34 to detach the guanine base from the RNA, forming a covalent enzyme-RNA intermediate. The proton acceptor active site deprotonates the incoming PreQ1, allowing a nucleophilic attack on the C1' of the ribose to form the product. After dissociation, two additional enzymatic reactions on the tRNA convert PreQ1 to queuine (Q), resulting in the hypermodified nucleoside queuosine (7-(((4,5-cis-dihydroxy-2-cyclopenten-1-yl)amino)methyl)-7-deazaguanosine). The protein is Queuine tRNA-ribosyltransferase of Bacillus cytotoxicus (strain DSM 22905 / CIP 110041 / 391-98 / NVH 391-98).